Reading from the N-terminus, the 508-residue chain is Maturase K (508 aa).

This sequence belongs to the intron maturase 2 family. MatK subfamily.

It localises to the plastid. The protein resides in the chloroplast. Its function is as follows. Usually encoded in the trnK tRNA gene intron. Probably assists in splicing its own and other chloroplast group II introns. The polypeptide is Maturase K (Wolffia arrhiza (Rootless water-meal)).